The following is a 427-amino-acid chain: 3-phosphoshikimate 1-carboxyvinyltransferase (427 aa).

Lys-20 contributes to the phosphoenolpyruvate binding site. 3-phosphoshikimate is bound by residues Ser-21 and Arg-25. Positions 92 and 120 each coordinate phosphoenolpyruvate. Positions 166, 167, 168, 312, and 339 each coordinate 3-phosphoshikimate. Gln-168 contacts phosphoenolpyruvate. The active-site Proton acceptor is the Asp-312. Residues Arg-343 and Arg-385 each coordinate phosphoenolpyruvate.

In terms of assembly, homotetramer.

The protein resides in the cytoplasm. It carries out the reaction 3-phosphoshikimate + phosphoenolpyruvate = 5-O-(1-carboxyvinyl)-3-phosphoshikimate + phosphate. It functions in the pathway metabolic intermediate biosynthesis; chorismate biosynthesis; chorismate from D-erythrose 4-phosphate and phosphoenolpyruvate: step 6/7. Its activity is regulated as follows. Competitively inhibited by glyphosate. Activated by ammonium, rubidium or potassium ions. Catalyzes the transfer of the enolpyruvyl moiety of phosphoenolpyruvate (PEP) to the 5-hydroxyl of shikimate-3-phosphate (S3P) to produce enolpyruvyl shikimate-3-phosphate and inorganic phosphate. The chain is 3-phosphoshikimate 1-carboxyvinyltransferase from Streptococcus pneumoniae serotype 4 (strain ATCC BAA-334 / TIGR4).